Here is a 593-residue protein sequence, read N- to C-terminus: Cell surface glycoprotein (593 aa).

The N-terminal stretch at 1–22 (MRKFTLLMLLLIVISMSGIAGA) is a signal peptide. N-linked (GalNAc...) asparagine glycans are attached at residues Asn29, Asn58, Asn66, Asn74, Asn114, Asn122, Asn145, Asn148, Asn158, Asn176, Asn208, Asn231, Asn326, Asn336, Asn340, Asn431, Asn471, Asn500, and Asn516.

Post-translationally, N-glycosylated; contains glycans composed of methyl-Man, Man and GalNAc residues in a molar ratio of 2:3:1.

The protein localises to the secreted. It is found in the cell wall. Its subcellular location is the S-layer. Its function is as follows. The S-layer is a paracrystalline mono-layered assembly of proteins which coat the surface of the cell. In Methanothermus fervidus (strain ATCC 43054 / DSM 2088 / JCM 10308 / V24 S), this protein is Cell surface glycoprotein (slgA).